We begin with the raw amino-acid sequence, 268 residues long: Ribosomal RNA small subunit methyltransferase A (268 aa).

The S-adenosyl-L-methionine site is built by N18, L20, G45, E66, D91, and N112.

It belongs to the class I-like SAM-binding methyltransferase superfamily. rRNA adenine N(6)-methyltransferase family. RsmA subfamily.

The protein resides in the cytoplasm. The enzyme catalyses adenosine(1518)/adenosine(1519) in 16S rRNA + 4 S-adenosyl-L-methionine = N(6)-dimethyladenosine(1518)/N(6)-dimethyladenosine(1519) in 16S rRNA + 4 S-adenosyl-L-homocysteine + 4 H(+). Its function is as follows. Specifically dimethylates two adjacent adenosines (A1518 and A1519) in the loop of a conserved hairpin near the 3'-end of 16S rRNA in the 30S particle. May play a critical role in biogenesis of 30S subunits. The chain is Ribosomal RNA small subunit methyltransferase A from Shewanella oneidensis (strain ATCC 700550 / JCM 31522 / CIP 106686 / LMG 19005 / NCIMB 14063 / MR-1).